The primary structure comprises 236 residues: Sugar fermentation stimulation protein homolog (236 aa).

It belongs to the SfsA family.

In Gloeobacter violaceus (strain ATCC 29082 / PCC 7421), this protein is Sugar fermentation stimulation protein homolog.